The sequence spans 274 residues: NAD-dependent protein deacetylase (274 aa).

The 274-residue stretch at 1 to 274 folds into the Deacetylase sirtuin-type domain; that stretch reads MDSRMSDLQA…CDEVLAEVVS (274 aa). Residues 26 to 46 and 104 to 107 contribute to the NAD(+) site; these read GAGCSTASGIPDYRDGQGQWK and QNVD. H122 serves as the catalytic Proton acceptor. The Zn(2+) site is built by C130, C133, C181, and C184. Residues 221 to 223, 247 to 249, and C265 each bind NAD(+); these read GSS and NLG.

This sequence belongs to the sirtuin family. Class II subfamily. It depends on Zn(2+) as a cofactor.

The protein localises to the cytoplasm. It carries out the reaction N(6)-acetyl-L-lysyl-[protein] + NAD(+) + H2O = 2''-O-acetyl-ADP-D-ribose + nicotinamide + L-lysyl-[protein]. Functionally, NAD-dependent protein deacetylase which modulates the activities of several enzymes which are inactive in their acetylated form. This chain is NAD-dependent protein deacetylase, found in Bordetella bronchiseptica (strain ATCC BAA-588 / NCTC 13252 / RB50) (Alcaligenes bronchisepticus).